A 461-amino-acid polypeptide reads, in one-letter code: V-type ATP synthase beta chain (461 aa).

It belongs to the ATPase alpha/beta chains family.

In terms of biological role, produces ATP from ADP in the presence of a proton gradient across the membrane. The V-type beta chain is a regulatory subunit. The polypeptide is V-type ATP synthase beta chain (Clostridium botulinum (strain ATCC 19397 / Type A)).